Here is a 297-residue protein sequence, read N- to C-terminus: Ubiquinol oxidase 2, mitochondrial (297 aa).

Residues 17–43 are disordered; that stretch reads VALNDKQHDKKVENGGAAASGGGDGGD. A helical membrane pass occupies residues 122–142; the sequence is AMMLETVAAVPGMVGGMLLHC. Positions 126, 165, and 168 each coordinate Fe cation. Residues 184–204 traverse the membrane as a helical segment; that stretch reads ALVFAVQGVFINAYFVTYLLS. Fe cation-binding residues include E216, E267, and H270.

The protein belongs to the alternative oxidase family. As to quaternary structure, homodimer; disulfide-linked. Fe cation serves as cofactor.

The protein localises to the mitochondrion inner membrane. It carries out the reaction 2 a ubiquinol + O2 = 2 a ubiquinone + 2 H2O. Functionally, catalyzes the cyanide-resistant oxidation of ubiquinol and the reduction of molecular oxygen to water, but does not translocate protons and consequently is not linked to oxidative phosphorylation. May increase respiration when the cytochrome respiratory pathway is restricted, or in response to low temperatures. The chain is Ubiquinol oxidase 2, mitochondrial (AOX2) from Nicotiana tabacum (Common tobacco).